Consider the following 250-residue polypeptide: 5-oxoprolinase subunit A (250 aa).

The protein belongs to the LamB/PxpA family. In terms of assembly, forms a complex composed of PxpA, PxpB and PxpC.

The catalysed reaction is 5-oxo-L-proline + ATP + 2 H2O = L-glutamate + ADP + phosphate + H(+). Functionally, catalyzes the cleavage of 5-oxoproline to form L-glutamate coupled to the hydrolysis of ATP to ADP and inorganic phosphate. The sequence is that of 5-oxoprolinase subunit A from Klebsiella pneumoniae (strain 342).